A 641-amino-acid polypeptide reads, in one-letter code: Phosphomethylpyrimidine synthase (641 aa).

The segment covering 1–12 has biased composition (polar residues); that stretch reads MTDTSTQNTATP. A disordered region spans residues 1 to 25; sequence MTDTSTQNTATPTDEYGAEIHPKHS. Substrate-binding positions include N200, M229, Y258, H294, 314 to 316, 355 to 358, and E394; these read SRG and DGLR. Zn(2+) is bound at residue H398. A substrate-binding site is contributed by Y421. Residue H462 coordinates Zn(2+). 3 residues coordinate [4Fe-4S] cluster: C542, C545, and C550.

The protein belongs to the ThiC family. The cofactor is [4Fe-4S] cluster.

The catalysed reaction is 5-amino-1-(5-phospho-beta-D-ribosyl)imidazole + S-adenosyl-L-methionine = 4-amino-2-methyl-5-(phosphooxymethyl)pyrimidine + CO + 5'-deoxyadenosine + formate + L-methionine + 3 H(+). Its pathway is cofactor biosynthesis; thiamine diphosphate biosynthesis. Functionally, catalyzes the synthesis of the hydroxymethylpyrimidine phosphate (HMP-P) moiety of thiamine from aminoimidazole ribotide (AIR) in a radical S-adenosyl-L-methionine (SAM)-dependent reaction. This is Phosphomethylpyrimidine synthase from Corynebacterium jeikeium (strain K411).